A 380-amino-acid polypeptide reads, in one-letter code: Succinyl-diaminopimelate desuccinylase (380 aa).

His70 provides a ligand contact to Zn(2+). Asp72 is an active-site residue. Asp103 serves as a coordination point for Zn(2+). Glu137 functions as the Proton acceptor in the catalytic mechanism. Positions 138, 166, and 352 each coordinate Zn(2+).

Belongs to the peptidase M20A family. DapE subfamily. As to quaternary structure, homodimer. Zn(2+) is required as a cofactor. Requires Co(2+) as cofactor.

The enzyme catalyses N-succinyl-(2S,6S)-2,6-diaminopimelate + H2O = (2S,6S)-2,6-diaminopimelate + succinate. The protein operates within amino-acid biosynthesis; L-lysine biosynthesis via DAP pathway; LL-2,6-diaminopimelate from (S)-tetrahydrodipicolinate (succinylase route): step 3/3. Functionally, catalyzes the hydrolysis of N-succinyl-L,L-diaminopimelic acid (SDAP), forming succinate and LL-2,6-diaminopimelate (DAP), an intermediate involved in the bacterial biosynthesis of lysine and meso-diaminopimelic acid, an essential component of bacterial cell walls. The sequence is that of Succinyl-diaminopimelate desuccinylase from Azoarcus sp. (strain BH72).